Consider the following 323-residue polypeptide: Transaldolase (323 aa).

Lys-133 (schiff-base intermediate with substrate) is an active-site residue.

It belongs to the transaldolase family. Type 1 subfamily. Monomer.

The catalysed reaction is D-sedoheptulose 7-phosphate + D-glyceraldehyde 3-phosphate = D-erythrose 4-phosphate + beta-D-fructose 6-phosphate. It participates in carbohydrate degradation; pentose phosphate pathway; D-glyceraldehyde 3-phosphate and beta-D-fructose 6-phosphate from D-ribose 5-phosphate and D-xylulose 5-phosphate (non-oxidative stage): step 2/3. Its function is as follows. Important for the balance of metabolites in the pentose-phosphate pathway. Involved in xylose fermentation to ethanol. The polypeptide is Transaldolase (Gibberella intermedia (Bulb rot disease fungus)).